We begin with the raw amino-acid sequence, 245 residues long: NAD-dependent protein deacetylase (245 aa).

Residues 1 to 245 (MIFVQQFEEV…EFVEGLSSMK (245 aa)) form the Deacetylase sirtuin-type domain. The NAD(+) site is built by alanine 26, threonine 30, phenylalanine 37, arginine 38, glutamine 105, isoleucine 107, aspartate 108, and histidine 123. Phenylalanine 37 contacts nicotinamide. Positions 107 and 108 each coordinate nicotinamide. Histidine 123 (proton acceptor) is an active-site residue. Residues cysteine 131, cysteine 134, cysteine 151, and cysteine 154 each coordinate Zn(2+). NAD(+) is bound by residues threonine 190, serine 191, asparagine 216, and isoleucine 234.

Belongs to the sirtuin family. Class U subfamily. Zn(2+) serves as cofactor.

It is found in the cytoplasm. The catalysed reaction is N(6)-acetyl-L-lysyl-[protein] + NAD(+) + H2O = 2''-O-acetyl-ADP-D-ribose + nicotinamide + L-lysyl-[protein]. Its function is as follows. NAD-dependent protein deacetylase which modulates the activities of several enzymes which are inactive in their acetylated form. The protein is NAD-dependent protein deacetylase of Bacillus cereus (strain ATCC 14579 / DSM 31 / CCUG 7414 / JCM 2152 / NBRC 15305 / NCIMB 9373 / NCTC 2599 / NRRL B-3711).